We begin with the raw amino-acid sequence, 74 residues long: RNA-binding protein Hfq (74 aa).

Residues 9 to 69 (DQFLNQLRKE…ISTFAPQKNV (61 aa)) enclose the Sm domain.

The protein belongs to the Hfq family. In terms of assembly, homohexamer.

In terms of biological role, RNA chaperone that binds small regulatory RNA (sRNAs) and mRNAs to facilitate mRNA translational regulation in response to envelope stress, environmental stress and changes in metabolite concentrations. Also binds with high specificity to tRNAs. This is RNA-binding protein Hfq from Anoxybacillus flavithermus (strain DSM 21510 / WK1).